The sequence spans 248 residues: MGLSRVRAVFFDLDNTLIDTAGASRRGMLEVIKLLQSKYHYKEEAEVICDKVQVKLSKECFHPYSTCITDVRTSHWEEAIQETKGGADNRKLAEECYFLWKSTRLQHMTLEEDVKAMLTELRKEVRLLLLTNGDRQTQREKIEACACQSYFDAIVVGGEQKEEKPAPSIFYHCCDLLGVQPGDCVMVGDTLETDIQGGLNAGLKATVWINKSGGVPLTSSPMPHYMVSSVLELPALLQSIDCKVSMSV.

Position 12 (D12) interacts with Mg(2+). Residues L13, D14, T131, N132, and K164 each contribute to the phosphate site. D14 contacts Mg(2+). D189 serves as a coordination point for Mg(2+).

This sequence belongs to the HAD-like hydrolase superfamily. NANP family. Mg(2+) is required as a cofactor.

It catalyses the reaction N-acetylneuraminate 9-phosphate + H2O = N-acetylneuraminate + phosphate. The enzyme catalyses N-glycoloylneuraminate 9-phosphate + H2O = N-glycoloylneuraminate + phosphate. It functions in the pathway amino-sugar metabolism; N-acetylneuraminate biosynthesis. Its activity is regulated as follows. Inhibited by calcium. Inhibited by vanadate, sodium orthovanadate and phosphonate. In terms of biological role, catalyzes the dephosphorylation of N-acylneuraminate 9-phosphate (Neu5Ac-9-P) to N-acetylneuraminic acid (Neu5Ac or sialic acid). Can also use N-glycoloylneuraminate 9-phosphate as substrate. This is N-acylneuraminate-9-phosphatase from Rattus norvegicus (Rat).